We begin with the raw amino-acid sequence, 113 residues long: Large ribosomal subunit protein bL17 (113 aa).

Belongs to the bacterial ribosomal protein bL17 family. In terms of assembly, part of the 50S ribosomal subunit. Contacts protein L32.

This is Large ribosomal subunit protein bL17 from Syntrophomonas wolfei subsp. wolfei (strain DSM 2245B / Goettingen).